Reading from the N-terminus, the 693-residue chain is Follicle-stimulating hormone receptor (693 aa).

The N-terminal stretch at 1-18 (MFLVFTCSLILLASCSSC) is a signal peptide. Disulfide bonds link Cys18-Cys25 and Cys23-Cys32. Residues 19–46 (QHHTCHCAGRIFICQESKVVQLPRDIPT) enclose the LRRNT domain. At 19–366 (QHHTCHCAGR…EDIMGYTILR (348 aa)) the chain is on the extracellular side. An N-linked (GlcNAc...) asparagine glycan is attached at Asn47. LRR repeat units follow at residues 49-72 (TELR…LLDL), 73-97 (EKIE…LPKL), 98-118 (HEIR…AFQH), 119-143 (LPSL…KVHS), 144-169 (FQKV…MGLS), 170-192 (SESV…AFNG), 193-216 (TYLD…VFQG), 217-240 (ANGP…GLEL), and 241-259 (IKKL…PDLS). N-linked (GlcNAc...) asparagine glycosylation is found at Asn191 and Asn199. N-linked (GlcNAc...) asparagine glycosylation is present at Asn268. 4 cysteine pairs are disulfide-bonded: Cys275-Cys346, Cys276-Cys292, Cys276-Cys356, and Cys292-Cys338. Residues 367 to 387 (VLIWFISILAITGNIVVLIIL) form a helical membrane-spanning segment. Residues 388-398 (ISSQYKLTVPR) are Cytoplasmic-facing. A helical transmembrane segment spans residues 399-421 (FLMCNLAFADLCIGIYLLFIASV). Residues 422–443 (DIQTKSQYYNYAIDWQTGAGCN) lie on the Extracellular side of the membrane. An intrachain disulfide couples Cys442 to Cys517. A helical membrane pass occupies residues 444–465 (AAGFFTVFASELSVYTLTVITL). Residues 466–485 (ERWHTITYAMQLDRKVRFRH) are Cytoplasmic-facing. Residues 486-508 (AVIIMIFGWMFAFTVALLPIFGV) form a helical membrane-spanning segment. Residues 509 to 528 (SSYMKVSICLPMDIETPFSQ) lie on the Extracellular side of the membrane. Residues 529 to 550 (AYVIFLLVLNVLAFVIICACYI) form a helical membrane-spanning segment. Residues 551 to 573 (CIYFTVRNPNVISSNSDTKIAKR) lie on the Cytoplasmic side of the membrane. Residues 574 to 597 (MAILIFTDFLCMAPISFFAISASL) form a helical membrane-spanning segment. Residues 598–608 (KVPLITVSKSK) lie on the Extracellular side of the membrane. A helical transmembrane segment spans residues 609-630 (ILLVLFYPINSCANPFLYAIFT). Topologically, residues 631–693 (KTFRRDFFIL…YSLVPLNHLN (63 aa)) are cytoplasmic.

It belongs to the G-protein coupled receptor 1 family. FSH/LSH/TSH subfamily. As to quaternary structure, homotrimer. Functions as a homotrimer binding the FSH hormone heterodimer composed of CGA and FSHB.

It localises to the cell membrane. G protein-coupled receptor for follitropin, the follicle-stimulating hormone. Through cAMP production activates the downstream PI3K-AKT and ERK1/ERK2 signaling pathways. The protein is Follicle-stimulating hormone receptor (FSHR) of Cairina moschata (Muscovy duck).